We begin with the raw amino-acid sequence, 310 residues long: Probable GTP 3',8-cyclase (310 aa).

A Radical SAM core domain is found at 5-218 (KYGRSLQKLR…VNIIFELGGR (214 aa)). Arg14 is a GTP binding site. Residues Cys21, Cys25, and Cys28 each contribute to the [4Fe-4S] cluster site. Lys62 is a GTP binding site. Residue Gly66 participates in S-adenosyl-L-methionine binding. Position 91 (Thr91) interacts with GTP. Ser115 contributes to the S-adenosyl-L-methionine binding site. Lys153 contributes to the GTP binding site. [4Fe-4S] cluster-binding residues include Cys251, Cys254, and Cys268.

It belongs to the radical SAM superfamily. MoaA family. The cofactor is [4Fe-4S] cluster.

The enzyme catalyses GTP + AH2 + S-adenosyl-L-methionine = (8S)-3',8-cyclo-7,8-dihydroguanosine 5'-triphosphate + 5'-deoxyadenosine + L-methionine + A + H(+). It functions in the pathway cofactor biosynthesis; molybdopterin biosynthesis. Its function is as follows. Catalyzes the cyclization of GTP to (8S)-3',8-cyclo-7,8-dihydroguanosine 5'-triphosphate. The polypeptide is Probable GTP 3',8-cyclase (Pyrobaculum aerophilum (strain ATCC 51768 / DSM 7523 / JCM 9630 / CIP 104966 / NBRC 100827 / IM2)).